The primary structure comprises 248 residues: 1-(5-phosphoribosyl)-5-[(5-phosphoribosylamino)methylideneamino] imidazole-4-carboxamide isomerase (248 aa).

Asp8 serves as the catalytic Proton acceptor. Residue Asp127 is the Proton donor of the active site.

Belongs to the HisA/HisF family.

It is found in the cytoplasm. It carries out the reaction 1-(5-phospho-beta-D-ribosyl)-5-[(5-phospho-beta-D-ribosylamino)methylideneamino]imidazole-4-carboxamide = 5-[(5-phospho-1-deoxy-D-ribulos-1-ylimino)methylamino]-1-(5-phospho-beta-D-ribosyl)imidazole-4-carboxamide. Its pathway is amino-acid biosynthesis; L-histidine biosynthesis; L-histidine from 5-phospho-alpha-D-ribose 1-diphosphate: step 4/9. The protein is 1-(5-phosphoribosyl)-5-[(5-phosphoribosylamino)methylideneamino] imidazole-4-carboxamide isomerase of Thermotoga neapolitana (strain ATCC 49049 / DSM 4359 / NBRC 107923 / NS-E).